We begin with the raw amino-acid sequence, 308 residues long: Transaldolase (308 aa).

The active-site Schiff-base intermediate with substrate is the lysine 125.

This sequence belongs to the transaldolase family. Type 1 subfamily. In terms of assembly, homodimer.

The protein localises to the cytoplasm. It carries out the reaction D-sedoheptulose 7-phosphate + D-glyceraldehyde 3-phosphate = D-erythrose 4-phosphate + beta-D-fructose 6-phosphate. It functions in the pathway carbohydrate degradation; pentose phosphate pathway; D-glyceraldehyde 3-phosphate and beta-D-fructose 6-phosphate from D-ribose 5-phosphate and D-xylulose 5-phosphate (non-oxidative stage): step 2/3. Its function is as follows. Transaldolase is important for the balance of metabolites in the pentose-phosphate pathway. The polypeptide is Transaldolase (Pseudomonas entomophila (strain L48)).